Here is a 618-residue protein sequence, read N- to C-terminus: Dihydroxy-acid dehydratase 1 (618 aa).

Residue Asp81 coordinates Mg(2+). Cys122 contributes to the [2Fe-2S] cluster binding site. The Mg(2+) site is built by Asp123 and Lys124. Lys124 bears the N6-carboxylysine mark. Residue Cys195 participates in [2Fe-2S] cluster binding. Glu491 contacts Mg(2+). Ser517 functions as the Proton acceptor in the catalytic mechanism.

This sequence belongs to the IlvD/Edd family. As to quaternary structure, homodimer. It depends on [2Fe-2S] cluster as a cofactor. Mg(2+) is required as a cofactor.

The catalysed reaction is (2R)-2,3-dihydroxy-3-methylbutanoate = 3-methyl-2-oxobutanoate + H2O. It carries out the reaction (2R,3R)-2,3-dihydroxy-3-methylpentanoate = (S)-3-methyl-2-oxopentanoate + H2O. The protein operates within amino-acid biosynthesis; L-isoleucine biosynthesis; L-isoleucine from 2-oxobutanoate: step 3/4. Its pathway is amino-acid biosynthesis; L-valine biosynthesis; L-valine from pyruvate: step 3/4. Functions in the biosynthesis of branched-chain amino acids. Catalyzes the dehydration of (2R,3R)-2,3-dihydroxy-3-methylpentanoate (2,3-dihydroxy-3-methylvalerate) into 2-oxo-3-methylpentanoate (2-oxo-3-methylvalerate) and of (2R)-2,3-dihydroxy-3-methylbutanoate (2,3-dihydroxyisovalerate) into 2-oxo-3-methylbutanoate (2-oxoisovalerate), the penultimate precursor to L-isoleucine and L-valine, respectively. This chain is Dihydroxy-acid dehydratase 1, found in Pseudoalteromonas translucida (strain TAC 125).